A 139-amino-acid polypeptide reads, in one-letter code: Putative truncated protein trichome birefringence-like 46 (139 aa).

The protein belongs to the PC-esterase family. TBL subfamily.

In Arabidopsis thaliana (Mouse-ear cress), this protein is Putative truncated protein trichome birefringence-like 46 (TBL46).